The chain runs to 673 residues: MQSKFWFEFLQTLPTLPGDTVPVMAIQASPGETSGELIIAQAPNQTLDNNNSALGGLSPLLFFPVVIIAVIFLILVTIFLYTRFYVIAPNNEALVRTGGVFKKEQMVILHGGCIVIPGFHEITRVSLREISIDVVRAGNLAVRTQDYMRANMRVTFYVCITPNRNEILTAAARLSKKGQISEADIKDALEKRADDAIRAAAKKKKLAELDSDKLGFADEVLNLIQGDLRKVGLTLNNIAISEIEESDTYDENNFFDAQGVRLRTETIQRSIQQKREVELTTRVAIEQGELEAEKKSLAIKREQEDANITQQKEIELLKLAQRKELESQEAQQQREIQEAKDKEEAKKERNKILQEQAVEEERIQKELAIQNSQIASAIALEERNKELKVAQALQKQEAEVAEIQRKKTIEASQLQAKAEIALAEQKTQITEQTAAIAIANKQKERLEAEALRAEAESGVITAQEVEAAERAQKLAVIVAQQDAQQHRIAEQNVVEIDVFRRRRQAESARQAAELEAESIRTLADANRHKAMAEAEGQKAIIEAHNSLSNANRTAELLKTIWPELVTQLPDLIKALAPQPGVLGESRIYSFPGLSGSNGNGSNSGDINKLLLSTSGLTLLNGLLNEGKLSTVVDQVKSLLQDPPSVSPPSAAVSEDDWPDLAPPTETNFSPEEI.

The chain crosses the membrane as a helical span at residues 60 to 80 (LLFFPVVIIAVIFLILVTIFL). Residues 639 to 673 (LQDPPSVSPPSAAVSEDDWPDLAPPTETNFSPEEI) form a disordered region. The span at 664–673 (TETNFSPEEI) shows a compositional bias: polar residues.

The protein belongs to the band 7/mec-2 family. Flotillin subfamily. As to quaternary structure, homooligomerizes.

The protein resides in the cell inner membrane. Its subcellular location is the membrane raft. Found in functional membrane microdomains (FMM) that may be equivalent to eukaryotic membrane rafts. FMMs are highly dynamic and increase in number as cells age. Flotillins are thought to be important factors in membrane fluidity. This Synechocystis sp. (strain ATCC 27184 / PCC 6803 / Kazusa) protein is Flotillin family inner membrane protein sll1021.